Consider the following 262-residue polypeptide: Acyl-[acyl-carrier-protein]--UDP-N-acetylglucosamine O-acyltransferase (262 aa).

Belongs to the transferase hexapeptide repeat family. LpxA subfamily. As to quaternary structure, homotrimer.

Its subcellular location is the cytoplasm. The catalysed reaction is a (3R)-hydroxyacyl-[ACP] + UDP-N-acetyl-alpha-D-glucosamine = a UDP-3-O-[(3R)-3-hydroxyacyl]-N-acetyl-alpha-D-glucosamine + holo-[ACP]. It participates in glycolipid biosynthesis; lipid IV(A) biosynthesis; lipid IV(A) from (3R)-3-hydroxytetradecanoyl-[acyl-carrier-protein] and UDP-N-acetyl-alpha-D-glucosamine: step 1/6. Its function is as follows. Involved in the biosynthesis of lipid A, a phosphorylated glycolipid that anchors the lipopolysaccharide to the outer membrane of the cell. This is Acyl-[acyl-carrier-protein]--UDP-N-acetylglucosamine O-acyltransferase from Mannheimia succiniciproducens (strain KCTC 0769BP / MBEL55E).